Here is a 662-residue protein sequence, read N- to C-terminus: Probable actin-related protein 8 (662 aa).

Basic and acidic residues-rich tracts occupy residues 50 to 59 and 67 to 77; these read AGEKDAKETE and TKQDDSKKSQV. Positions 50-92 are disordered; that stretch reads AGEKDAKETESESANGDTKQDDSKKSQVEEEEDGIEESELGEE. The span at 78–89 shows a compositional bias: acidic residues; the sequence is EEEEDGIEESEL. 339–342 serves as a coordination point for ATP; that stretch reads DMGA.

This sequence belongs to the actin family. Component of the chromatin remodeling Ino80 complex. Exists as monomers and dimers, but the dimer is most probably the biologically relevant form required for stable interactions with histones that exploits the twofold symmetry of the nucleosome core.

Its subcellular location is the nucleus. Its function is as follows. Probably involved in transcription regulation via its interaction with the INO80 complex, a chromatin remodeling complex. Exhibits low basal ATPase activity, and unable to polymerize. Strongly prefer nucleosomes and H3-H4 tetramers over H2A-H2B dimers, suggesting it may act as a nucleosome recognition module within the complex. This Schizosaccharomyces pombe (strain 972 / ATCC 24843) (Fission yeast) protein is Probable actin-related protein 8.